Consider the following 652-residue polypeptide: Beta-mannosyltransferase 1 (652 aa).

Topologically, residues 1-15 (MVDLFQWLKFYSMRR) are cytoplasmic. A helical transmembrane segment spans residues 16-34 (LGQVAITLVLLNLFVFLGY). At 35–652 (KFTPSTVIGS…LYQLQEEERS (618 aa)) the chain is on the extracellular side. N-linked (GlcNAc...) asparagine glycosylation is present at Asn57. Residues 535–652 (PARYAKQMEN…LYQLQEEERS (118 aa)) are a coiled coil. The segment at 536-621 (ARYAKQMENE…EAKENEAKKK (86 aa)) is disordered.

It belongs to the BMT family.

It localises to the membrane. Beta-mannosyltransferase involved in cell wall biosynthesis. Involved in the beta-mannosylation of outer chains of N-glycans. This chain is Beta-mannosyltransferase 1 (BMT1), found in Komagataella phaffii (strain ATCC 76273 / CBS 7435 / CECT 11047 / NRRL Y-11430 / Wegner 21-1) (Yeast).